A 109-amino-acid polypeptide reads, in one-letter code: APNTNFVSSACNTQKIPSGNPFFNNLGAMLADLKQNTAFSGYDYKTSRAGSGGAPTAYGRAICKSSISQSDCTACLSNLVGRIWGICSNAIGARVQLTDCFIQYEQHSF.

In terms of domain architecture, Gnk2-homologous spans 4 to 109 (TNFVSSACNT…CFIQYEQHSF (106 aa)). 3 cysteine pairs are disulfide-bonded: Cys11-Cys87, Cys63-Cys72, and Cys75-Cys100. Asn12 is a binding site for alpha-D-mannopyranose. Alpha-D-mannopyranose is bound by residues Arg94 and Glu105.

Functionally, exerts antifungal activity through its carbohydrate-binding specificity. The polypeptide is Antifungal protein ginkbilobin-like protein (Picea abies (Norway spruce)).